A 166-amino-acid polypeptide reads, in one-letter code: Ribonuclease H (166 aa).

Residues 5–147 (PRKRVALFTD…VDREARRQAQ (143 aa)) enclose the RNase H type-1 domain. Mg(2+) contacts are provided by Asp-14, Glu-52, Asp-74, and Asp-139. The segment at 128 to 166 (GHTGHPENERVDREARRQAQSQAKTPCPPRAPTLFHEEA) is disordered. The segment covering 131–144 (GHPENERVDREARR) has biased composition (basic and acidic residues).

The protein belongs to the RNase H family. As to quaternary structure, monomer. It depends on Mg(2+) as a cofactor.

The enzyme catalyses Endonucleolytic cleavage to 5'-phosphomonoester.. Its function is as follows. Endonuclease that specifically degrades the RNA of RNA-DNA hybrids. In Thermus thermophilus (strain ATCC 27634 / DSM 579 / HB8), this protein is Ribonuclease H (rnhA).